The following is a 277-amino-acid chain: Bifunctional protein FolD (277 aa).

NADP(+) contacts are provided by residues 160-162 (GAS), Ser-185, and Ile-226.

This sequence belongs to the tetrahydrofolate dehydrogenase/cyclohydrolase family. In terms of assembly, homodimer.

The catalysed reaction is (6R)-5,10-methylene-5,6,7,8-tetrahydrofolate + NADP(+) = (6R)-5,10-methenyltetrahydrofolate + NADPH. The enzyme catalyses (6R)-5,10-methenyltetrahydrofolate + H2O = (6R)-10-formyltetrahydrofolate + H(+). It participates in one-carbon metabolism; tetrahydrofolate interconversion. Its function is as follows. Catalyzes the oxidation of 5,10-methylenetetrahydrofolate to 5,10-methenyltetrahydrofolate and then the hydrolysis of 5,10-methenyltetrahydrofolate to 10-formyltetrahydrofolate. This Vesicomyosocius okutanii subsp. Calyptogena okutanii (strain HA) protein is Bifunctional protein FolD.